The primary structure comprises 777 residues: Homoaconitase, mitochondrial (777 aa).

The N-terminal 35 residues, 1–35 (MFKRTGSLLLRCRASRVPVIGRPLISLSTSSTSLS), are a transit peptide targeting the mitochondrion. The segment at 47–74 (LRRYTEASSSTTQTSPSSSSWPAPDAAP) is disordered. The segment covering 52-74 (EASSSTTQTSPSSSSWPAPDAAP) has biased composition (low complexity). Residues Cys-398, Cys-466, and Cys-469 each contribute to the [4Fe-4S] cluster site.

Belongs to the aconitase/IPM isomerase family. Requires [4Fe-4S] cluster as cofactor.

It is found in the mitochondrion. The enzyme catalyses (2R,3S)-homoisocitrate = cis-homoaconitate + H2O. The protein operates within amino-acid biosynthesis; L-lysine biosynthesis via AAA pathway; L-alpha-aminoadipate from 2-oxoglutarate: step 3/5. Its function is as follows. Catalyzes the reversible hydration of cis-homoaconitate to (2R,3S)-homoisocitrate, a step in the alpha-aminoadipate pathway for lysine biosynthesis. The sequence is that of Homoaconitase, mitochondrial (lys4) from Aspergillus fumigatus (strain ATCC MYA-4609 / CBS 101355 / FGSC A1100 / Af293) (Neosartorya fumigata).